We begin with the raw amino-acid sequence, 394 residues long: Elongation factor Tu (394 aa).

Positions 10-204 constitute a tr-type G domain; that stretch reads KPHVNIGTIG…AVDSYIPQPV (195 aa). A G1 region spans residues 19–26; sequence GHVDHGKT. 19 to 26 serves as a coordination point for GTP; it reads GHVDHGKT. Thr26 lines the Mg(2+) pocket. The segment at 60–64 is G2; the sequence is GITIS. Residues 81–84 are G3; it reads DCPG. GTP is bound by residues 81–85 and 136–139; these read DCPGH and NKID. Residues 136–139 are G4; sequence NKID. The segment at 174–176 is G5; that stretch reads SAL.

Belongs to the TRAFAC class translation factor GTPase superfamily. Classic translation factor GTPase family. EF-Tu/EF-1A subfamily. In terms of assembly, monomer.

The protein localises to the cytoplasm. The catalysed reaction is GTP + H2O = GDP + phosphate + H(+). Functionally, GTP hydrolase that promotes the GTP-dependent binding of aminoacyl-tRNA to the A-site of ribosomes during protein biosynthesis. The chain is Elongation factor Tu from Rickettsia rickettsii.